The chain runs to 205 residues: Thymidylate kinase (205 aa).

Gly-11–Thr-18 contacts ATP.

Belongs to the thymidylate kinase family.

It carries out the reaction dTMP + ATP = dTDP + ADP. Functionally, phosphorylation of dTMP to form dTDP in both de novo and salvage pathways of dTTP synthesis. The protein is Thymidylate kinase of Clostridium novyi (strain NT).